The chain runs to 183 residues: Translation initiation factor IF-3 (183 aa).

Belongs to the IF-3 family. Monomer.

It localises to the cytoplasm. In terms of biological role, IF-3 binds to the 30S ribosomal subunit and shifts the equilibrium between 70S ribosomes and their 50S and 30S subunits in favor of the free subunits, thus enhancing the availability of 30S subunits on which protein synthesis initiation begins. This Vibrio cholerae serotype O1 (strain ATCC 39315 / El Tor Inaba N16961) protein is Translation initiation factor IF-3.